Here is a 103-residue protein sequence, read N- to C-terminus: Integration host factor subunit beta (103 aa).

Residues Arg-62–Lys-81 form a disordered region.

This sequence belongs to the bacterial histone-like protein family. In terms of assembly, heterodimer of an alpha and a beta chain.

Its function is as follows. This protein is one of the two subunits of integration host factor, a specific DNA-binding protein that functions in genetic recombination as well as in transcriptional and translational control. This is Integration host factor subunit beta from Xanthomonas axonopodis pv. citri (strain 306).